We begin with the raw amino-acid sequence, 298 residues long: Keratin-associated protein 10-11 (298 aa).

Tandem repeats lie at residues 26–30, 36–40, 57–61, 79–83, 89–93, 99–103, 104–108, 109–113, 114–118, 119–123, 126–130, 136–140, 146–150, 151–155, 156–160, 168–172, 178–182, 188–192, 193–197, 203–207, 225–229, 230–234, 249–253, 256–260, and 267–271. Residues 26 to 271 form a 25 X 5 AA repeats of C-C-X(3) region; it reads CCEPPCSAPS…SCQSSCCRPA (246 aa).

The protein belongs to the KRTAP type 10 family. In terms of assembly, interacts with hair keratins. In terms of tissue distribution, restricted to a narrow region of the hair fiber cuticle, lying approximately 20 cell layers above the apex of the dermal papilla of the hair root; not detected in any other tissues.

Functionally, in the hair cortex, hair keratin intermediate filaments are embedded in an interfilamentous matrix, consisting of hair keratin-associated proteins (KRTAP), which are essential for the formation of a rigid and resistant hair shaft through their extensive disulfide bond cross-linking with abundant cysteine residues of hair keratins. The matrix proteins include the high-sulfur and high-glycine-tyrosine keratins. This chain is Keratin-associated protein 10-11 (KRTAP10-11), found in Homo sapiens (Human).